A 548-amino-acid chain; its full sequence is 5-epi-aristolochene synthase (548 aa).

(2E,6E)-farnesyl diphosphate is bound by residues Arg264, Asp301, Asp305, Arg441, and Asp444. Residues Asp301 and Asp305 each contribute to the Mg(2+) site. The DDXXD motif motif lies at 301-305 (DDTFD). The Mg(2+) site is built by Asp444, Asp445, Thr448, and Glu452.

This sequence belongs to the terpene synthase family. As to quaternary structure, monomer. Mg(2+) is required as a cofactor. Post-translationally, self-alkylated at Tyr-520 in the presence of (2Z,6E)-farnesyl diphosphate ((Z,E)-FPP). Self-alkylated at Asp-444 at warm temperature (42 degrees Celsius) in the presence of (2E,6E)-farnesyl diphosphate ((E,E)-FPP).

The protein resides in the cytoplasm. It catalyses the reaction (2E,6E)-farnesyl diphosphate = (+)-5-epi-aristolochene + diphosphate. The catalysed reaction is (2Z,6E)-farnesyl diphosphate = (+)-2-epi-prezizaene + diphosphate. It carries out the reaction (2Z,6E)-farnesyl diphosphate = (-)-alpha-cedrene + diphosphate. The enzyme catalyses (2Z,6E)-farnesyl diphosphate = (-)-beta-curcumene + diphosphate. Its pathway is secondary metabolite biosynthesis; terpenoid biosynthesis. Inhibited activity toward farnesyl diphosphate (FPP) by anilinogeranyl diphosphate (AGPP); AGPP undergoes a cyclization event leading to the formation of a novel macrocyclic paracyclophane alkaloid. Repressed by sesquilavandulyl diphosphate (SPP) via the induction of self-alkyation. In terms of biological role, catalyzes the cyclization of trans,trans-farnesyl diphosphate (FPP) to the bicyclic intermediate 5-epi-aristolochene, initial step in the conversion of FPP to the sesquiterpenoid antifungal phytoalexin capsidiol. Produces germacrene A as an enzyme-bound intermediate that is not released by the enzyme, but is further cyclized to produce the bicyclic 5-epi-aristolochene. Mediates, at low levels, the formation of 4-epi-eremophilene and premnaspirodiene from trans,trans-farnesyl diphosphate. Also mediates the conversion of cis,trans-farnesyl diphosphate to cisoid minor products such as (+)-2-epi-prezizaene, (-)-alpha-cedrene and, to a lesser extent, (-)-beta-curcumene; also produces, at low levels, alpha-acoradiene and 4-epi-alpha-acoradiene, but barely nerolidol, alpha-bisabolol, epi-alpha-bisabolol and cis-farnesol. The sequence is that of 5-epi-aristolochene synthase (EAS3) from Nicotiana tabacum (Common tobacco).